The following is a 146-amino-acid chain: Oleosin (146 aa).

Alanine 2 is subject to N-acetylalanine. 3 helical membrane passes run isoleucine 22–threonine 42, valine 56–alanine 76, and glycine 77–asparagine 97. A Proline-knot motif is present at residues proline 55–proline 66.

The protein belongs to the oleosin family. Expressed in pollen (at protein level).

The protein localises to the lipid droplet. It is found in the membrane. This Pinus elliottii (Slash pine) protein is Oleosin.